The following is a 447-amino-acid chain: N-succinylarginine dihydrolase (447 aa).

Substrate contacts are provided by residues 19–28, N110, and 137–138; these read AGLSFGNKAS and HR. E174 is a catalytic residue. Residue R212 participates in substrate binding. H248 is an active-site residue. Substrate is bound by residues D250 and N359. C365 acts as the Nucleophile in catalysis.

Belongs to the succinylarginine dihydrolase family. In terms of assembly, homodimer.

It catalyses the reaction N(2)-succinyl-L-arginine + 2 H2O + 2 H(+) = N(2)-succinyl-L-ornithine + 2 NH4(+) + CO2. Its pathway is amino-acid degradation; L-arginine degradation via AST pathway; L-glutamate and succinate from L-arginine: step 2/5. Catalyzes the hydrolysis of N(2)-succinylarginine into N(2)-succinylornithine, ammonia and CO(2). The chain is N-succinylarginine dihydrolase from Escherichia coli O157:H7.